The sequence spans 96 residues: Probable quinol oxidase subunit 4 (96 aa).

Helical transmembrane passes span 8–28 (TVGF…TLYT), 37–57 (TIIF…FMHL), and 68–88 (FKVI…YWVM).

Belongs to the cytochrome c oxidase bacterial subunit 4 family.

The protein resides in the cell membrane. The enzyme catalyses 2 a quinol + O2 = 2 a quinone + 2 H2O. Catalyzes quinol oxidation with the concomitant reduction of oxygen to water. The chain is Probable quinol oxidase subunit 4 (qoxD) from Staphylococcus haemolyticus (strain JCSC1435).